The primary structure comprises 154 residues: Troponin C, isoallergen Bla g 6.0301 (154 aa).

4 EF-hand domains span residues 11–46 (EQIS…MGQP), 47–82 (FNRR…FIIE), 87–122 (AMEK…LDEQ), and 123–154 (LTSD…MMTG). Ca(2+) is bound by residues Asp60, Asp62, Ser64, Arg66, and Glu71. 5 residues coordinate Ca(2+): Asp136, Asp138, Ser140, Thr142, and Glu147.

The protein belongs to the troponin C family.

Functionally, troponin is the central regulatory protein of striated muscle contraction. It consists of three components: Troponin-I (Tn-I) which is the inhibitor of actomyosin ATPase, Troponin-T (Tn-T) which contains the binding site for tropomyosin and Troponin-C (Tn-C). The binding of calcium to Tn-C abolishes the inhibitory action of Tn on actin filaments. The sequence is that of Troponin C, isoallergen Bla g 6.0301 from Blattella germanica (German cockroach).